The primary structure comprises 340 residues: Putative esterase YheT (340 aa).

The AB hydrolase-1 domain occupies 73–312; that stretch reads PRLVVFHGLE…TEHGGHVGFI (240 aa). Catalysis depends on charge relay system residues serine 153, aspartate 280, and histidine 308.

This sequence belongs to the AB hydrolase superfamily. AB hydrolase 4 family.

This is Putative esterase YheT (yheT) from Escherichia coli (strain K12).